Reading from the N-terminus, the 423-residue chain is Glutamyl-tRNA reductase (423 aa).

Residues 49–52, S111, 116–118, and Q122 contribute to the substrate site; these read TCNR and EPQ. Residue C50 is the Nucleophile of the active site. Position 191–196 (191–196) interacts with NADP(+); it reads GAGEMS.

This sequence belongs to the glutamyl-tRNA reductase family. As to quaternary structure, homodimer.

The catalysed reaction is (S)-4-amino-5-oxopentanoate + tRNA(Glu) + NADP(+) = L-glutamyl-tRNA(Glu) + NADPH + H(+). Its pathway is porphyrin-containing compound metabolism; protoporphyrin-IX biosynthesis; 5-aminolevulinate from L-glutamyl-tRNA(Glu): step 1/2. Its function is as follows. Catalyzes the NADPH-dependent reduction of glutamyl-tRNA(Glu) to glutamate 1-semialdehyde (GSA). This Syntrophus aciditrophicus (strain SB) protein is Glutamyl-tRNA reductase.